Reading from the N-terminus, the 137-residue chain is Ribonuclease VapC51 (137 aa).

The PINc domain maps to 5 to 120; the sequence is YLLDTSVIKR…HYDADFDLIA (116 aa). Positions 8 and 95 each coordinate Mg(2+).

The protein belongs to the PINc/VapC protein family. Requires Mg(2+) as cofactor.

In terms of biological role, toxic component of a type II toxin-antitoxin (TA) system. An RNase. Its cognate antitoxin is VapB51. The chain is Ribonuclease VapC51 from Mycobacterium tuberculosis (strain ATCC 25618 / H37Rv).